We begin with the raw amino-acid sequence, 502 residues long: ATP synthase subunit alpha (502 aa).

169–176 is a binding site for ATP; that stretch reads GDRQTGKT.

It belongs to the ATPase alpha/beta chains family. As to quaternary structure, F-type ATPases have 2 components, CF(1) - the catalytic core - and CF(0) - the membrane proton channel. CF(1) has five subunits: alpha(3), beta(3), gamma(1), delta(1), epsilon(1). CF(0) has three main subunits: a(1), b(2) and c(9-12). The alpha and beta chains form an alternating ring which encloses part of the gamma chain. CF(1) is attached to CF(0) by a central stalk formed by the gamma and epsilon chains, while a peripheral stalk is formed by the delta and b chains.

It is found in the cell inner membrane. The enzyme catalyses ATP + H2O + 4 H(+)(in) = ADP + phosphate + 5 H(+)(out). Produces ATP from ADP in the presence of a proton gradient across the membrane. The alpha chain is a regulatory subunit. The chain is ATP synthase subunit alpha from Desulfovibrio desulfuricans (strain ATCC 27774 / DSM 6949 / MB).